Reading from the N-terminus, the 133-residue chain is Small ribosomal subunit protein uS8c (133 aa).

It belongs to the universal ribosomal protein uS8 family. Part of the 30S ribosomal subunit.

It is found in the plastid. It localises to the chloroplast. Functionally, one of the primary rRNA binding proteins, it binds directly to 16S rRNA central domain where it helps coordinate assembly of the platform of the 30S subunit. This is Small ribosomal subunit protein uS8c (rps8) from Chlorokybus atmophyticus (Soil alga).